Here is a 192-residue protein sequence, read N- to C-terminus: Rho-related protein racC (192 aa).

13–20 serves as a coordination point for GTP; that stretch reads GDGAVGKT. Positions 35-43 match the Effector region motif; that stretch reads YIPTVFDNY. GTP-binding positions include 60–64 and 118–121; these read DTAGQ and TKLD. Residue cysteine 189 is modified to Cysteine methyl ester. Cysteine 189 carries S-geranylgeranyl cysteine lipidation. Positions 190–192 are cleaved as a propeptide — removed in mature form; sequence IVM.

This sequence belongs to the small GTPase superfamily. Rho family. As to quaternary structure, interacts with pakB.

Its subcellular location is the cell membrane. The sequence is that of Rho-related protein racC (racC) from Dictyostelium discoideum (Social amoeba).